The primary structure comprises 370 residues: GTPase Obg (370 aa).

An Obg domain is found at 1–159 (MKFIDEARIE…RMVRLELKVL (159 aa)). The segment at 127–147 (NLHFKSSTNRAPRQKTDGKPG) is disordered. Positions 160–334 (ADVGLLGMPN…LCYAVYDYLA (175 aa)) constitute an OBG-type G domain. Residues 166–173 (GMPNAGKS), 191–195 (FTTLA), 213–216 (DIPG), 284–287 (NKLD), and 315–317 (SAL) contribute to the GTP site. Residues Ser-173 and Thr-193 each contribute to the Mg(2+) site.

It belongs to the TRAFAC class OBG-HflX-like GTPase superfamily. OBG GTPase family. As to quaternary structure, monomer. Requires Mg(2+) as cofactor.

It is found in the cytoplasm. An essential GTPase which binds GTP, GDP and possibly (p)ppGpp with moderate affinity, with high nucleotide exchange rates and a fairly low GTP hydrolysis rate. Plays a role in control of the cell cycle, stress response, ribosome biogenesis and in those bacteria that undergo differentiation, in morphogenesis control. This chain is GTPase Obg, found in Paraburkholderia phymatum (strain DSM 17167 / CIP 108236 / LMG 21445 / STM815) (Burkholderia phymatum).